The sequence spans 1066 residues: Carbamoyl phosphate synthase large chain (1066 aa).

Residues 1–401 (MPKNNNIKKV…ALMKAVRSLE (401 aa)) form a carboxyphosphate synthetic domain region. Residues arginine 129, arginine 169, glycine 175, glycine 176, arginine 208, isoleucine 210, glutamate 215, glycine 241, valine 242, histidine 243, glutamine 284, and glutamate 298 each contribute to the ATP site. Residues 133–327 (KNTMEKIGEP…IAKVAAKIAL (195 aa)) form the ATP-grasp 1 domain. Residues glutamine 284, glutamate 298, and asparagine 300 each coordinate Mg(2+). The Mn(2+) site is built by glutamine 284, glutamate 298, and asparagine 300. The tract at residues 402-547 (QNIYSMNYGD…YSCFDSENEV (146 aa)) is oligomerization domain. Residues 548 to 931 (DATKTKKKVL…ALYKAFLGAG (384 aa)) form a carbamoyl phosphate synthetic domain region. The ATP-grasp 2 domain maps to 673–863 (DEILEKCCIP…IVSLASKAVL (191 aa)). ATP is bound by residues arginine 709, lysine 748, leucine 750, glutamate 754, glycine 779, isoleucine 780, histidine 781, serine 782, glutamine 822, and glutamate 834. Glutamine 822, glutamate 834, and asparagine 836 together coordinate Mg(2+). Mn(2+) contacts are provided by glutamine 822, glutamate 834, and asparagine 836. One can recognise an MGS-like domain in the interval 932 to 1066 (INLPKHKKMI…ELSLIDIARI (135 aa)). Residues 932–1066 (INLPKHKKMI…ELSLIDIARI (135 aa)) are allosteric domain.

It belongs to the CarB family. Composed of two chains; the small (or glutamine) chain promotes the hydrolysis of glutamine to ammonia, which is used by the large (or ammonia) chain to synthesize carbamoyl phosphate. Tetramer of heterodimers (alpha,beta)4. Mg(2+) is required as a cofactor. Requires Mn(2+) as cofactor.

It catalyses the reaction hydrogencarbonate + L-glutamine + 2 ATP + H2O = carbamoyl phosphate + L-glutamate + 2 ADP + phosphate + 2 H(+). The enzyme catalyses hydrogencarbonate + NH4(+) + 2 ATP = carbamoyl phosphate + 2 ADP + phosphate + 2 H(+). The protein operates within amino-acid biosynthesis; L-arginine biosynthesis; carbamoyl phosphate from bicarbonate: step 1/1. It participates in pyrimidine metabolism; UMP biosynthesis via de novo pathway; (S)-dihydroorotate from bicarbonate: step 1/3. In terms of biological role, large subunit of the glutamine-dependent carbamoyl phosphate synthetase (CPSase). CPSase catalyzes the formation of carbamoyl phosphate from the ammonia moiety of glutamine, carbonate, and phosphate donated by ATP, constituting the first step of 2 biosynthetic pathways, one leading to arginine and/or urea and the other to pyrimidine nucleotides. The large subunit (synthetase) binds the substrates ammonia (free or transferred from glutamine from the small subunit), hydrogencarbonate and ATP and carries out an ATP-coupled ligase reaction, activating hydrogencarbonate by forming carboxy phosphate which reacts with ammonia to form carbamoyl phosphate. The chain is Carbamoyl phosphate synthase large chain from Lachnoclostridium phytofermentans (strain ATCC 700394 / DSM 18823 / ISDg) (Clostridium phytofermentans).